Here is a 972-residue protein sequence, read N- to C-terminus: Aminopeptidase Ey (972 aa).

Residues 2–10 (AAGFFISKS) lie on the Cytoplasmic side of the membrane. Residues 11-31 (VGIVGIVLALGAVATIIALSV) traverse the membrane as a helical; Signal-anchor for type II membrane protein segment. Residues 32–972 (VYAQEKNKSS…AWFRAETASS (941 aa)) are Extracellular-facing. Positions 33–72 (YAQEKNKSSGGSGGSDTTSTTTASTTTTSTTTASTTAAPN) are cytosolic Ser/Thr-rich junction. Residues 37-77 (KNKSSGGSGGSDTTSTTTASTTTTSTTTASTTAAPNNPWNR) are disordered. An N-linked (GlcNAc...) asparagine glycan is attached at Asn38. Over residues 47 to 70 (SDTTSTTTASTTTTSTTTASTTAA) the composition is skewed to low complexity. The segment at 73-967 (NPWNRWRLPT…KEVVHAWFRA (895 aa)) is metalloprotease. Asn110, Asn132, Asn147, Asn206, Asn269, and Asn296 each carry an N-linked (GlcNAc...) asparagine glycan. 355-359 (GAMEN) provides a ligand contact to substrate. His391 is a Zn(2+) binding site. Glu392 acts as the Proton acceptor in catalysis. Residues His395 and Glu414 each coordinate Zn(2+). N-linked (GlcNAc...) asparagine glycosylation is found at Asn513, Asn574, Asn584, Asn628, Asn684, and Asn742. Residues Cys764 and Cys771 are joined by a disulfide bond. An N-linked (GlcNAc...) asparagine glycan is attached at Asn785. Cys801 and Cys837 form a disulfide bridge.

The protein belongs to the peptidase M1 family. As to quaternary structure, homodimer. Requires Zn(2+) as cofactor. Detected in the plasma and granule fractions of egg yolk (at protein level).

The protein resides in the cell membrane. It carries out the reaction Differs from other aminopeptidases in broad specificity for amino acids in the P1 position and the ability to hydrolyze peptides of four or five residues that contain Pro in the P1' position.. Broad specificity aminopeptidase. Degrades a variety of peptides possessing various N-terminal amino acids including hydrophobic, basic and acidic amino acids. Preferentially hydrolyzes small peptides consisting of 4 or 5 amino acids. Hydrolyzes the N-terminal Xaa-Pro bonds in the chicken brain peptide Leu-Pro-Leu-Arg-PheNH2, the substance P fragment Arg-Pro-Lys-Pro and the bradykinin fragment Arg-Pro-Pro-Gly-Phe. Hydrolyzes the N-formylated peptides fMet-Leu-Phe, fMet-Ala-Gly-Ser-Glu and fMet-Nle-Leu-Phe-Nle-Tyr-Lys, but does not hydrolyze peptides with acetylation or pyroglutamic acid at N-terminus. Does not hydrolyze large peptides such as complete substance P, bradykinin or schistoFLRFamide. This chain is Aminopeptidase Ey (ANPEP), found in Gallus gallus (Chicken).